The sequence spans 285 residues: uncharacterized protein (285 aa).

The Mn(2+) site is built by H110, D131, H133, D135, D214, and D216.

Belongs to the arginase family. The cofactor is Mn(2+).

This is an uncharacterized protein from Methanothermus fervidus.